The sequence spans 355 residues: Uroporphyrinogen decarboxylase (355 aa).

Residues 27-31, Asp-78, Tyr-155, Thr-210, and His-328 each bind substrate; that span reads RQAGR.

This sequence belongs to the uroporphyrinogen decarboxylase family. Homodimer.

It is found in the cytoplasm. The catalysed reaction is uroporphyrinogen III + 4 H(+) = coproporphyrinogen III + 4 CO2. It participates in porphyrin-containing compound metabolism; protoporphyrin-IX biosynthesis; coproporphyrinogen-III from 5-aminolevulinate: step 4/4. Its function is as follows. Catalyzes the decarboxylation of four acetate groups of uroporphyrinogen-III to yield coproporphyrinogen-III. The sequence is that of Uroporphyrinogen decarboxylase from Pseudomonas fluorescens (strain Pf0-1).